Consider the following 160-residue polypeptide: Ribosomal RNA large subunit methyltransferase H (160 aa).

S-adenosyl-L-methionine-binding residues include L76 and G108.

This sequence belongs to the RNA methyltransferase RlmH family. In terms of assembly, homodimer.

It is found in the cytoplasm. It catalyses the reaction pseudouridine(1915) in 23S rRNA + S-adenosyl-L-methionine = N(3)-methylpseudouridine(1915) in 23S rRNA + S-adenosyl-L-homocysteine + H(+). Functionally, specifically methylates the pseudouridine at position 1915 (m3Psi1915) in 23S rRNA. This Rhodopseudomonas palustris (strain BisB5) protein is Ribosomal RNA large subunit methyltransferase H.